The chain runs to 273 residues: Medium-wave-sensitive opsin 1 (273 aa).

At 1 to 5 (APRWV) the chain is on the extracellular side. A helical membrane pass occupies residues 6–30 (YHLTSAWMVFVVIASVFTNGLVLAA). The Cytoplasmic segment spans residues 31–42 (TMRFKKLRHPLN). The chain crosses the membrane as a helical span at residues 43–68 (WILVNLAIADLVETIIASTISVVNQM). The Extracellular portion of the chain corresponds to 69–82 (YGYFVLGHPLCVVE). A disulfide bridge connects residues cysteine 79 and cysteine 156. Residues 83-102 (GYTASLCGITGLWSLAIISW) traverse the membrane as a helical segment. Residues 103 to 121 (ERWMVVCRPFGNVRFDAKL) are Cytoplasmic-facing. The helical transmembrane segment at 122-145 (AIAGIAFSWIWAAVWTAPPIFGWS) threads the bilayer. Residues 146-171 (RYWPHGLKTSCGPDVFSGSSYPGVQS) are Extracellular-facing. Residues 172–199 (YMIVLMITCCFIPLSVIVLCYLQVWLAI) traverse the membrane as a helical segment. Topologically, residues 200–221 (RAVAKQQKESESTQKAEKEVTR) are cytoplasmic. Residues 222–245 (MVMVMIFAFCLCWGPYAFFACFAA) form a helical membrane-spanning segment. At 246 to 253 (AHPGYAFH) the chain is on the extracellular side. A helical membrane pass occupies residues 254–273 (PLVAALPAYFAKSATIYNPI). Lysine 265 is subject to N6-(retinylidene)lysine.

It belongs to the G-protein coupled receptor 1 family. Opsin subfamily. As to quaternary structure, monomer. Homodimer. Homotetramer. Post-translationally, O-glycosylated. Phosphorylated on some or all of the serine and threonine residues present in the C-terminal region. The three color pigments are found in the cone photoreceptor cells.

The protein resides in the membrane. Functionally, visual pigments are the light-absorbing molecules that mediate vision. They consist of an apoprotein, opsin, covalently linked to cis-retinal. This chain is Medium-wave-sensitive opsin 1 (OPN1MW), found in Odocoileus virginianus virginianus (Virginia white-tailed deer).